The sequence spans 204 residues: Minor allergen Cla h 7 (204 aa).

Residues 5–195 form the Flavodoxin-like domain; sequence IAIIFYSTWG…ELTAQGKAFY (191 aa).

Belongs to the WrbA family.

It localises to the cytoplasm. The chain is Minor allergen Cla h 7 (CLAH7) from Davidiella tassiana (Mycosphaerella tassiana).